The primary structure comprises 144 residues: Flagellar assembly factor FliW (144 aa).

Belongs to the FliW family. As to quaternary structure, interacts with translational regulator CsrA and flagellin(s).

Its subcellular location is the cytoplasm. In terms of biological role, acts as an anti-CsrA protein, binds CsrA and prevents it from repressing translation of its target genes, one of which is flagellin. Binds to flagellin and participates in the assembly of the flagellum. This is Flagellar assembly factor FliW from Geobacillus sp. (strain WCH70).